The primary structure comprises 191 residues: Shikimate kinase (191 aa).

24–29 is a binding site for ATP; that stretch reads GSGKTS. Residue threonine 28 participates in Mg(2+) binding. Residues aspartate 46, arginine 70, and glycine 92 each contribute to the substrate site. Arginine 130 contributes to the ATP binding site. Residue arginine 149 participates in substrate binding.

Belongs to the shikimate kinase family. Monomer. It depends on Mg(2+) as a cofactor.

The protein resides in the cytoplasm. The enzyme catalyses shikimate + ATP = 3-phosphoshikimate + ADP + H(+). Its pathway is metabolic intermediate biosynthesis; chorismate biosynthesis; chorismate from D-erythrose 4-phosphate and phosphoenolpyruvate: step 5/7. Catalyzes the specific phosphorylation of the 3-hydroxyl group of shikimic acid using ATP as a cosubstrate. This Synechococcus sp. (strain CC9902) protein is Shikimate kinase.